The chain runs to 267 residues: Tryptophan synthase alpha chain (267 aa).

Catalysis depends on proton acceptor residues glutamate 47 and aspartate 58.

This sequence belongs to the TrpA family. Tetramer of two alpha and two beta chains.

The catalysed reaction is (1S,2R)-1-C-(indol-3-yl)glycerol 3-phosphate + L-serine = D-glyceraldehyde 3-phosphate + L-tryptophan + H2O. It participates in amino-acid biosynthesis; L-tryptophan biosynthesis; L-tryptophan from chorismate: step 5/5. Its function is as follows. The alpha subunit is responsible for the aldol cleavage of indoleglycerol phosphate to indole and glyceraldehyde 3-phosphate. The polypeptide is Tryptophan synthase alpha chain (Chlorobium phaeovibrioides (strain DSM 265 / 1930) (Prosthecochloris vibrioformis (strain DSM 265))).